A 252-amino-acid polypeptide reads, in one-letter code: Phosphate import ATP-binding protein PstB (252 aa).

Residues 6-247 form the ABC transporter domain; the sequence is ITINNLNFYY…PRDKRTEDYI (242 aa). ATP is bound at residue 38 to 45; it reads GPSGCGKS.

Belongs to the ABC transporter superfamily. Phosphate importer (TC 3.A.1.7) family. The complex is composed of two ATP-binding proteins (PstB), two transmembrane proteins (PstC and PstA) and a solute-binding protein (PstS).

The protein resides in the cell membrane. The catalysed reaction is phosphate(out) + ATP + H2O = ADP + 2 phosphate(in) + H(+). Its function is as follows. Part of the ABC transporter complex PstSACB involved in phosphate import. Responsible for energy coupling to the transport system. The polypeptide is Phosphate import ATP-binding protein PstB (Moorella thermoacetica (strain ATCC 39073 / JCM 9320)).